The sequence spans 249 residues: 5'-nucleotidase SurE (249 aa).

Residues D8, D9, S39, and N91 each contribute to the a divalent metal cation site.

Belongs to the SurE nucleotidase family. A divalent metal cation is required as a cofactor.

The protein localises to the cytoplasm. It carries out the reaction a ribonucleoside 5'-phosphate + H2O = a ribonucleoside + phosphate. Nucleotidase that shows phosphatase activity on nucleoside 5'-monophosphates. The sequence is that of 5'-nucleotidase SurE from Pseudomonas putida (strain W619).